The following is a 193-amino-acid chain: Transmembrane protein 276 (193 aa).

Positions 1–32 (MTPRPGGEWSSALSHLALGAVSLHAALSTAQA) are cleaved as a signal peptide. The next 4 helical transmembrane spans lie at 35 to 55 (GAAA…ASGL), 63 to 83 (AGAW…FHWV), 89 to 109 (SANL…HLGA), and 114 to 134 (VAGQ…AVFT).

The protein resides in the membrane. This is Transmembrane protein 276 from Bos taurus (Bovine).